A 207-amino-acid polypeptide reads, in one-letter code: GTP-binding protein Rheb homolog 1 (207 aa).

GTP contacts are provided by Gly-25, Lys-26, Ser-27, Tyr-42, Thr-45, Asn-126, Asp-129, and Ala-157. Ser-27 lines the Mg(2+) pocket. Positions 42-50 match the Effector region motif; the sequence is YESTIEDQH. Thr-45 contributes to the Mg(2+) binding site. Over residues 180–193 the composition is skewed to polar residues; the sequence is NLSPTERPNGNSPK. Positions 180-207 are disordered; it reads NLSPTERPNGNSPKRNPFKDDGKPCSIS. A compositionally biased stretch (basic and acidic residues) spans 196–207; the sequence is PFKDDGKPCSIS. At Cys-204 the chain carries Cysteine methyl ester. Residue Cys-204 is the site of S-farnesyl cysteine attachment. Residues 205–207 constitute a propeptide, removed in mature form; it reads SIS.

Belongs to the small GTPase superfamily. Rheb family.

The protein resides in the cell membrane. It carries out the reaction GTP + H2O = GDP + phosphate + H(+). Binds GTP and exhibits intrinsic GTPase activity. This Caenorhabditis elegans protein is GTP-binding protein Rheb homolog 1 (rheb-1).